Consider the following 103-residue polypeptide: Small ribosomal subunit protein uS10 (103 aa).

It belongs to the universal ribosomal protein uS10 family. In terms of assembly, part of the 30S ribosomal subunit.

Functionally, involved in the binding of tRNA to the ribosomes. This is Small ribosomal subunit protein uS10 from Bordetella petrii (strain ATCC BAA-461 / DSM 12804 / CCUG 43448).